The sequence spans 190 residues: ATP synthase subunit delta (190 aa).

This sequence belongs to the ATPase delta chain family. As to quaternary structure, F-type ATPases have 2 components, F(1) - the catalytic core - and F(0) - the membrane proton channel. F(1) has five subunits: alpha(3), beta(3), gamma(1), delta(1), epsilon(1). F(0) has three main subunits: a(1), b(2) and c(10-14). The alpha and beta chains form an alternating ring which encloses part of the gamma chain. F(1) is attached to F(0) by a central stalk formed by the gamma and epsilon chains, while a peripheral stalk is formed by the delta and b chains.

Its subcellular location is the cell inner membrane. In terms of biological role, f(1)F(0) ATP synthase produces ATP from ADP in the presence of a proton or sodium gradient. F-type ATPases consist of two structural domains, F(1) containing the extramembraneous catalytic core and F(0) containing the membrane proton channel, linked together by a central stalk and a peripheral stalk. During catalysis, ATP synthesis in the catalytic domain of F(1) is coupled via a rotary mechanism of the central stalk subunits to proton translocation. Functionally, this protein is part of the stalk that links CF(0) to CF(1). It either transmits conformational changes from CF(0) to CF(1) or is implicated in proton conduction. The chain is ATP synthase subunit delta from Petrotoga mobilis (strain DSM 10674 / SJ95).